The chain runs to 283 residues: Phosphate import ATP-binding protein PstB (283 aa).

Positions 1 to 20 (MAQTLAQTKQISQSHTFDVS) are enriched in polar residues. Positions 1 to 32 (MAQTLAQTKQISQSHTFDVSQSHHKTPDDTNS) are disordered. Residues 37–278 (YSTQNLDLWY…PSNKKTEDYI (242 aa)) form the ABC transporter domain. Residue 69–76 (GPSGCGKS) coordinates ATP.

Belongs to the ABC transporter superfamily. Phosphate importer (TC 3.A.1.7) family. The complex is composed of two ATP-binding proteins (PstB), two transmembrane proteins (PstC and PstA) and a solute-binding protein (PstS).

The protein resides in the cell membrane. The catalysed reaction is phosphate(out) + ATP + H2O = ADP + 2 phosphate(in) + H(+). In terms of biological role, part of the ABC transporter complex PstSACB involved in phosphate import. Responsible for energy coupling to the transport system. This chain is Phosphate import ATP-binding protein PstB, found in Staphylococcus aureus (strain MRSA252).